The primary structure comprises 463 residues: MAGAGERKGKKDDNGIGTAIDFVLSNARLVLGVGGAAMLGIATLAVKRMYDRAISAPTSPTRLSHSGKRSWEEPNWMGSPRLLNRDMKTGLSRSLQTLPTDSSAFDTDTFCPPRPKPLARRGQVDLKKSRLRMSLQEKLLSYYRNRAAIPAGEQARAKQAAVDICAELRSFLRAKLPDMPLRDMYLSGSLYDDLQVVTADHIQLIVPLVLEQNLWSCIPGEDTIMNIPGFFLVRRENPEYFPRGSSYWDRCVVGGYLSPKTVADTFEKVVAGSINWPAIGSLLDYVIRPAPPPEALTLEVQYERDKHLVIDFLPSVTLGDTVLVARPHRLAQYDNLWRLSLRPAETARLRALDQADSGCRSLCLKILKAICKSTPALGHLTASQLTNVILHLSQEEADWSPDMLADRFLQALRGLISYLEAGVLPSALNPKVNLFAELTPHEIDELGYTLYCSLSEPEVLLQT.

At 1–23 (MAGAGERKGKKDDNGIGTAIDFV) the chain is on the mitochondrial intermembrane side. A helical membrane pass occupies residues 24–46 (LSNARLVLGVGGAAMLGIATLAV). Over 47–463 (KRMYDRAISA…LSEPEVLLQT (417 aa)) the chain is Cytoplasmic. Residues 49–195 (MYDRAISAPT…LSGSLYDDLQ (147 aa)) form a dimerization region. A phosphoserine mark is found at serine 55, serine 59, serine 79, and serine 94. Residues 57–77 (PTSPTRLSHSGKRSWEEPNWM) form a disordered region. An important for interaction with DNM1L region spans residues 160–169 (AAVDICAELR). ADP contacts are provided by serine 187, serine 189, and histidine 201. The interval 234-243 (RRENPEYFPR) is important for interaction with DNM1L. Residues serine 340, arginine 342, and lysine 368 each contribute to the ADP site.

The protein belongs to the MID49/MID51 family. In terms of assembly, homodimer. Interacts with DNM1L.

The protein resides in the mitochondrion outer membrane. Mitochondrial outer membrane protein which regulates mitochondrial fission/fusion dynamics. Promotes the recruitment and association of the fission mediator dynamin-related protein 1 (DNM1L) to the mitochondrial surface independently of the mitochondrial fission FIS1 and MFF proteins. Regulates DNM1L GTPase activity and DNM1L oligomerization. Binds ADP and can also bind GDP, although with lower affinity. Does not bind CDP, UDP, ATP, AMP or GTP. Inhibits DNM1L GTPase activity in the absence of bound ADP. Requires ADP to stimulate DNM1L GTPase activity and the assembly of DNM1L into long, oligomeric tubules with a spiral pattern, as opposed to the ring-like DNM1L oligomers observed in the absence of bound ADP. Does not require ADP for its function in recruiting DNM1L. In Rattus norvegicus (Rat), this protein is Mitochondrial dynamics protein MID51 (Mief1).